A 292-amino-acid chain; its full sequence is Transcription antiterminator LacT (292 aa).

PRD domains lie at 66 to 170 (NIPI…DDGE) and 172 to 284 (VFGK…APAQ).

The protein belongs to the transcriptional antiterminator BglG family.

Mediates positive regulation of the lac operon by functioning as an antiterminator factor of transcription. This chain is Transcription antiterminator LacT (lacT), found in Lacticaseibacillus casei (Lactobacillus casei).